The sequence spans 477 residues: ACT domain-containing protein ACR1 (477 aa).

ACT domains follow at residues 38-124 (LIKV…REVQ), 134-214 (AFEI…GDVS), 283-358 (MVNV…RASQ), and 361-441 (KLEI…MMPR). A Bipartite nuclear localization signal motif is present at residues 329 to 345 (KKNGGTLETEGQRERLR).

In terms of tissue distribution, expressed in flowers and siliques.

It localises to the nucleus. Functionally, may bind amino acids. The chain is ACT domain-containing protein ACR1 from Arabidopsis thaliana (Mouse-ear cress).